Here is a 134-residue protein sequence, read N- to C-terminus: Putative pre-16S rRNA nuclease (134 aa).

Belongs to the YqgF nuclease family.

Its subcellular location is the cytoplasm. In terms of biological role, could be a nuclease involved in processing of the 5'-end of pre-16S rRNA. The sequence is that of Putative pre-16S rRNA nuclease from Helicobacter pylori (strain Shi470).